A 696-amino-acid chain; its full sequence is Spindle assembly checkpoint component MAD1 (696 aa).

Disordered regions lie at residues 1–22 and 394–415; these read MSTG…SINN and QIHA…TENK. Residues 402–413 show a composition bias toward basic and acidic residues; it reads KQQEQEKEENTE.

The protein belongs to the MAD1 family. As to quaternary structure, component of the mitotic checkpoint complex (MCC).

The protein localises to the nucleus. Functionally, central component of the spindle assembly checkpoint which is a feedback control that prevents cells with incompletely assembled spindles from leaving mitosis. The sequence is that of Spindle assembly checkpoint component MAD1 from Candida albicans (strain SC5314 / ATCC MYA-2876) (Yeast).